A 148-amino-acid chain; its full sequence is Deoxyuridine 5'-triphosphate nucleotidohydrolase (148 aa).

Substrate contacts are provided by residues 67-69, asparagine 80, 84-86, and methionine 94; these read RSG and LID.

This sequence belongs to the dUTPase family. Mg(2+) serves as cofactor.

It carries out the reaction dUTP + H2O = dUMP + diphosphate + H(+). Its pathway is pyrimidine metabolism; dUMP biosynthesis; dUMP from dCTP (dUTP route): step 2/2. In terms of biological role, this enzyme is involved in nucleotide metabolism: it produces dUMP, the immediate precursor of thymidine nucleotides and it decreases the intracellular concentration of dUTP so that uracil cannot be incorporated into DNA. The sequence is that of Deoxyuridine 5'-triphosphate nucleotidohydrolase from Francisella tularensis subsp. holarctica (strain FTNF002-00 / FTA).